The primary structure comprises 134 residues: UPF0412 protein YaaI (134 aa).

An N-terminal signal peptide occupies residues 1-23; the sequence is MRSVLTISAGLLFGLALSSVAHA.

Belongs to the UPF0412 family.

The polypeptide is UPF0412 protein YaaI (Salmonella agona (strain SL483)).